Here is a 289-residue protein sequence, read N- to C-terminus: D-alanine aminotransferase (289 aa).

Tyr-31 is a binding site for substrate. Arg-50 serves as a coordination point for pyridoxal 5'-phosphate. The substrate site is built by Arg-99 and His-101. Catalysis depends on Lys-147, which acts as the Proton acceptor. Lys-147 bears the N6-(pyridoxal phosphate)lysine mark. Glu-179 provides a ligand contact to pyridoxal 5'-phosphate.

The protein belongs to the class-IV pyridoxal-phosphate-dependent aminotransferase family. In terms of assembly, homodimer. It depends on pyridoxal 5'-phosphate as a cofactor.

It catalyses the reaction D-alanine + 2-oxoglutarate = D-glutamate + pyruvate. Acts on the D-isomers of alanine, leucine, aspartate, glutamate, aminobutyrate, norvaline and asparagine. The enzyme transfers an amino group from a substrate D-amino acid to the pyridoxal phosphate cofactor to form pyridoxamine and an alpha-keto acid in the first half-reaction. The second half-reaction is the reverse of the first, transferring the amino group from the pyridoxamine to a second alpha-keto acid to form the product D-amino acid via a ping-pong mechanism. This is an important process in the formation of D-alanine and D-glutamate, which are essential bacterial cell wall components. This Listeria monocytogenes serotype 4b (strain F2365) protein is D-alanine aminotransferase (dat).